Reading from the N-terminus, the 443-residue chain is Chromosomal replication initiator protein DnaA (443 aa).

Residues 1 to 73 (MYGDHRQIWE…YDAASKATNK (73 aa)) are domain I, interacts with DnaA modulators. The interval 73–106 (KLYEIKILSEDEEEYREIKESIEKENLTESTTLS) is domain II. The tract at residues 107-323 (TLNPKYTFDT…GALIRIVAFS (217 aa)) is domain III, AAA+ region. Residues glycine 151, glycine 153, lysine 154, and threonine 155 each coordinate ATP. Positions 324-443 (NLTKANIDLE…EELKKRIKGY (120 aa)) are domain IV, binds dsDNA.

This sequence belongs to the DnaA family. In terms of assembly, oligomerizes as a right-handed, spiral filament on DNA at oriC.

The protein resides in the cytoplasm. Its function is as follows. Plays an essential role in the initiation and regulation of chromosomal replication. ATP-DnaA binds to the origin of replication (oriC) to initiate formation of the DNA replication initiation complex once per cell cycle. Binds the DnaA box (a 9 base pair repeat at the origin) and separates the double-stranded (ds)DNA. Forms a right-handed helical filament on oriC DNA; dsDNA binds to the exterior of the filament while single-stranded (ss)DNA is stabiized in the filament's interior. The ATP-DnaA-oriC complex binds and stabilizes one strand of the AT-rich DNA unwinding element (DUE), permitting loading of DNA polymerase. After initiation quickly degrades to an ADP-DnaA complex that is not apt for DNA replication. Binds acidic phospholipids. This Thermoanaerobacter pseudethanolicus (strain ATCC 33223 / 39E) (Clostridium thermohydrosulfuricum) protein is Chromosomal replication initiator protein DnaA.